A 378-amino-acid polypeptide reads, in one-letter code: tRNA (guanine(26)-N(2))-dimethyltransferase (378 aa).

The region spanning 4–374 (KEVTEGKVRI…KGYEEIIRCV (371 aa)) is the Trm1 methyltransferase domain. Residues Arg44, Arg69, Asp87, Asp114, and Ala115 each contribute to the S-adenosyl-L-methionine site. Residues Cys246, Cys249, Cys263, and Cys266 each coordinate Zn(2+).

The protein belongs to the class I-like SAM-binding methyltransferase superfamily. Trm1 family.

The catalysed reaction is guanosine(26) in tRNA + 2 S-adenosyl-L-methionine = N(2)-dimethylguanosine(26) in tRNA + 2 S-adenosyl-L-homocysteine + 2 H(+). Dimethylates a single guanine residue at position 26 of a number of tRNAs using S-adenosyl-L-methionine as donor of the methyl groups. This chain is tRNA (guanine(26)-N(2))-dimethyltransferase, found in Saccharolobus islandicus (strain Y.G.57.14 / Yellowstone #1) (Sulfolobus islandicus).